We begin with the raw amino-acid sequence, 117 residues long: Large ribosomal subunit protein uL18 (117 aa).

This sequence belongs to the universal ribosomal protein uL18 family. Part of the 50S ribosomal subunit; part of the 5S rRNA/L5/L18/L25 subcomplex. Contacts the 5S and 23S rRNAs.

Functionally, this is one of the proteins that bind and probably mediate the attachment of the 5S RNA into the large ribosomal subunit, where it forms part of the central protuberance. The sequence is that of Large ribosomal subunit protein uL18 from Thiobacillus denitrificans (strain ATCC 25259 / T1).